The following is a 468-amino-acid chain: bZIP transcription factor 14 (468 aa).

Disordered stretches follow at residues 55–149 (SRRK…EGRA) and 234–272 (SPQS…LGKD). Low complexity-rich tracts occupy residues 64–82 (SFVS…SSGS) and 95–106 (VTAASTESVSSS). A compositionally biased stretch (basic and acidic residues) spans 112 to 128 (KKADTDDRVQRSRERNR). Residues 117-165 (DDRVQRSRERNRIHARKTRQRKKEQMQSLEGRATDLKHEQIRLKQIINE) form the bZIP 1 domain. Positions 119–139 (RVQRSRERNRIHARKTRQRKK) are basic motif 1. Positions 129 to 138 (IHARKTRQRK) are enriched in basic residues. A leucine-zipper 1 region spans residues 145–159 (LEGRATDLKHEQIRL). A compositionally biased stretch (polar residues) spans 247–256 (ASTSDVSGDE). Residues 279–333 (EELDQIRRERNRMHAKRTRDRKRIFTEEMAEMCRILEEENHLLRVHLGGLDSDFK) enclose the bZIP 2 domain. The interval 285-312 (RRERNRMHAKRTRDRKRIFTEEMAEMCR) is basic motif 2. The segment at 313–320 (ILEEENHL) is leucine-zipper 2. A disordered region spans residues 400–468 (ERQQREAERK…TTSLAAPVGW (69 aa)). Residues 401–410 (RQQREAERKV) are compositionally biased toward basic and acidic residues. Residues 417-426 (SAASDTSTSD) are compositionally biased toward low complexity.

The protein belongs to the bZIP family.

Its subcellular location is the nucleus. Its function is as follows. Transcriptional activator which binds to the C-box-like motif 5'-TGACGT-3' and A-box-like motif 5'-GTACGTA-3' of target promoters to positively regulate the expression of genes involved in the tricarboxylic acid (TCA) cycle in response to nitrogen starvation. May also regulate the TCA cycle during day-to-night transitions. This chain is bZIP transcription factor 14, found in Phaeodactylum tricornutum (strain CCAP 1055/1).